A 575-amino-acid chain; its full sequence is E3 ubiquitin-protein ligase kcmf-1 (575 aa).

The ZZ-type zinc finger occupies 9-73 (HEGVSCDGCA…PMQLILSSVD (65 aa)). Zn(2+) contacts are provided by Cys-14, Cys-17, Cys-29, Cys-32, Cys-38, Cys-41, His-59, and His-63. 2 disordered regions span residues 277-306 (PIYP…DDND) and 530-575 (EADE…INID). 2 stretches are compositionally biased toward acidic residues: residues 297–306 (SADESEDDND) and 530–563 (EADE…ENDS).

It belongs to the KCMF1 family.

The protein resides in the cytoplasm. The protein localises to the late endosome. It localises to the lysosome. The catalysed reaction is S-ubiquitinyl-[E2 ubiquitin-conjugating enzyme]-L-cysteine + [acceptor protein]-L-lysine = [E2 ubiquitin-conjugating enzyme]-L-cysteine + N(6)-ubiquitinyl-[acceptor protein]-L-lysine.. Its pathway is protein modification; protein ubiquitination. E3 ubiquitin-protein ligase which accepts ubiquitin from an E2 ubiquitin-conjugating enzyme and then transfers it to targeted substrates, promoting their degradation by the proteasome. This is E3 ubiquitin-protein ligase kcmf-1 from Caenorhabditis elegans.